Consider the following 445-residue polypeptide: GTPase Der (445 aa).

EngA-type G domains follow at residues 3–167 (PVIA…YAGQ) and 180–353 (VKIA…AAAM). GTP-binding positions include 9 to 16 (GRPNVGKS), 56 to 60 (DTGGF), 119 to 122 (NKAE), 186 to 193 (GRPNVGKS), 233 to 237 (DTAGL), and 298 to 301 (NKWD). One can recognise a KH-like domain in the interval 354 to 438 (AKLPTPKLTR…PLRIEFRSST (85 aa)).

Belongs to the TRAFAC class TrmE-Era-EngA-EngB-Septin-like GTPase superfamily. EngA (Der) GTPase family. As to quaternary structure, associates with the 50S ribosomal subunit.

Its function is as follows. GTPase that plays an essential role in the late steps of ribosome biogenesis. This Paraburkholderia phytofirmans (strain DSM 17436 / LMG 22146 / PsJN) (Burkholderia phytofirmans) protein is GTPase Der.